The sequence spans 184 residues: uncharacterized protein (184 aa).

This is an uncharacterized protein from Methanocaldococcus jannaschii (strain ATCC 43067 / DSM 2661 / JAL-1 / JCM 10045 / NBRC 100440) (Methanococcus jannaschii).